A 116-amino-acid chain; its full sequence is Large ribosomal subunit protein uL18 (116 aa).

This sequence belongs to the universal ribosomal protein uL18 family. In terms of assembly, part of the 50S ribosomal subunit; part of the 5S rRNA/L5/L18/L25 subcomplex. Contacts the 5S and 23S rRNAs.

Functionally, this is one of the proteins that bind and probably mediate the attachment of the 5S RNA into the large ribosomal subunit, where it forms part of the central protuberance. This is Large ribosomal subunit protein uL18 from Pseudomonas fluorescens (strain ATCC BAA-477 / NRRL B-23932 / Pf-5).